Consider the following 501-residue polypeptide: Aminoaldehyde dehydrogenase ALDH10A8, chloroplastic (501 aa).

Residues Asp99 and Leu189 each coordinate Na(+). NAD(+) is bound by residues 238-243 (GSFATG) and 238-245 (GSFATGSK). Catalysis depends on Glu260, which acts as the Proton acceptor. NAD(+) contacts are provided by Cys294 and Glu393. The Nucleophile role is filled by Cys294.

This sequence belongs to the aldehyde dehydrogenase family. Homodimer. As to expression, widely expressed.

It is found in the cytoplasm. It localises to the plastid. Its subcellular location is the chloroplast. It carries out the reaction 4-aminobutanal + NAD(+) + H2O = 4-aminobutanoate + NADH + 2 H(+). It catalyses the reaction 3-aminopropanal + NAD(+) + H2O = beta-alanine + NADH + 2 H(+). The catalysed reaction is 4-(trimethylamino)butanal + NAD(+) + H2O = 4-(trimethylamino)butanoate + NADH + 2 H(+). The enzyme catalyses 4-guanidinobutanal + NAD(+) + H2O = 4-guanidinobutanoate + NADH + 2 H(+). It carries out the reaction betaine aldehyde + NAD(+) + H2O = glycine betaine + NADH + 2 H(+). Its pathway is amine and polyamine biosynthesis; betaine biosynthesis via choline pathway; betaine from betaine aldehyde: step 1/1. In terms of biological role, dehydrogenase that catalyzes the oxidation of several aminoaldehydes. Metabolizes and detoxifies aldehyde products of polyamine degradation to non-toxic amino acids. Catalyzes the oxidation of 4-aminobutanal and 3-aminopropanal to 4-aminobutanoate and beta-alanine, respectively. Production of 4-aminobutinoate by ALDH10A8 may confer tolerance to salt stress. Catalyzes the oxidation of 4-(trimethylamino)butanal and 4-guanidinobutanal to 4-trimethylammoniobutanoate and 4-guanidinobutanoate, respectively. Involved in glycine betaine biosynthesis. Catalyzes with low efficiency the oxidation of betaine aldehyde to glycine betaine. In Arabidopsis thaliana (Mouse-ear cress), this protein is Aminoaldehyde dehydrogenase ALDH10A8, chloroplastic.